The following is a 361-amino-acid chain: AP2/ERF and B3 domain-containing transcription repressor TEM1 (361 aa).

Residues 1–73 (MEYSCVDDSS…SRKLPSSKYK (73 aa)) form a disordered region. Positions 9–27 (SSTTSESLSISTTPKPTTT) are enriched in low complexity. The AP2/ERF DNA-binding region spans 71-126 (KYKGVVPQPNGRWGAQIYEKHQRVWLGTFNEEEEAASSYDIAVRRFRGRDAVTNFK). Residues 195-306 (FEKTVTPSDV…QLYIHWKVRS (112 aa)) constitute a DNA-binding region (TF-B3).

The protein belongs to the AP2/ERF transcription factor family. RAV subfamily. In terms of assembly, interacts with FT. In terms of tissue distribution, expressed in leaves.

The protein resides in the nucleus. Its function is as follows. Transcriptional repressor of flowering time on long day plants. Acts directly on FT expression by binding 5'-CAACA-3' and 5'-CACCTG-3 sequences. Functionally redundant with TEM2. This Arabidopsis thaliana (Mouse-ear cress) protein is AP2/ERF and B3 domain-containing transcription repressor TEM1 (TEM1).